A 143-amino-acid chain; its full sequence is Large ribosomal subunit protein uL11 (143 aa).

It belongs to the universal ribosomal protein uL11 family. Part of the ribosomal stalk of the 50S ribosomal subunit. Interacts with L10 and the large rRNA to form the base of the stalk. L10 forms an elongated spine to which L12 dimers bind in a sequential fashion forming a multimeric L10(L12)X complex. In terms of processing, one or more lysine residues are methylated.

Forms part of the ribosomal stalk which helps the ribosome interact with GTP-bound translation factors. This chain is Large ribosomal subunit protein uL11, found in Rhizorhabdus wittichii (strain DSM 6014 / CCUG 31198 / JCM 15750 / NBRC 105917 / EY 4224 / RW1) (Sphingomonas wittichii).